The primary structure comprises 245 residues: Probable transcriptional regulatory protein MAG6590 (245 aa).

This sequence belongs to the TACO1 family.

The protein localises to the cytoplasm. The chain is Probable transcriptional regulatory protein MAG6590 from Mycoplasmopsis agalactiae (strain NCTC 10123 / CIP 59.7 / PG2) (Mycoplasma agalactiae).